The following is a 235-amino-acid chain: Ribonuclease PH (235 aa).

Residues R86 and 124-126 each bind phosphate; that span reads GTR.

It belongs to the RNase PH family. In terms of assembly, homohexameric ring arranged as a trimer of dimers.

It carries out the reaction tRNA(n+1) + phosphate = tRNA(n) + a ribonucleoside 5'-diphosphate. In terms of biological role, phosphorolytic 3'-5' exoribonuclease that plays an important role in tRNA 3'-end maturation. Removes nucleotide residues following the 3'-CCA terminus of tRNAs; can also add nucleotides to the ends of RNA molecules by using nucleoside diphosphates as substrates, but this may not be physiologically important. Probably plays a role in initiation of 16S rRNA degradation (leading to ribosome degradation) during starvation. This Francisella tularensis subsp. mediasiatica (strain FSC147) protein is Ribonuclease PH.